The following is a 66-amino-acid chain: ATP synthase protein 8 (66 aa).

The chain crosses the membrane as a helical span at residues 8–24 (PWPMVIMSMILTLFYIT). The residue at position 54 (lysine 54) is an N6-acetyllysine; alternate. An N6-succinyllysine; alternate modification is found at lysine 54. Residue lysine 57 is modified to N6-acetyllysine.

This sequence belongs to the ATPase protein 8 family. F-type ATPases have 2 components, CF(1) - the catalytic core - and CF(0) - the membrane proton channel. Component of an ATP synthase complex composed of ATP5PB, ATP5MC1, ATP5F1E, ATP5PD, ATP5ME, ATP5PF, ATP5MF, MT-ATP6, MT-ATP8, ATP5F1A, ATP5F1B, ATP5F1D, ATP5F1C, ATP5PO, ATP5MG, ATP5MK and ATP5MJ. Interacts with PRICKLE3.

Its subcellular location is the mitochondrion membrane. Mitochondrial membrane ATP synthase (F(1)F(0) ATP synthase or Complex V) produces ATP from ADP in the presence of a proton gradient across the membrane which is generated by electron transport complexes of the respiratory chain. F-type ATPases consist of two structural domains, F(1) - containing the extramembraneous catalytic core and F(0) - containing the membrane proton channel, linked together by a central stalk and a peripheral stalk. During catalysis, ATP synthesis in the catalytic domain of F(1) is coupled via a rotary mechanism of the central stalk subunits to proton translocation. Part of the complex F(0) domain. Minor subunit located with subunit a in the membrane. The protein is ATP synthase protein 8 (MT-ATP8) of Alouatta guariba (Brown howler monkey).